We begin with the raw amino-acid sequence, 179 residues long: Large ribosomal subunit protein uL5 (179 aa).

Belongs to the universal ribosomal protein uL5 family. Part of the 50S ribosomal subunit; contacts the 5S rRNA and probably tRNA. Forms a bridge to the 30S subunit in the 70S ribosome.

This is one of the proteins that bind and probably mediate the attachment of the 5S RNA into the large ribosomal subunit, where it forms part of the central protuberance. In the 70S ribosome it contacts protein S13 of the 30S subunit (bridge B1b), connecting the 2 subunits; this bridge is implicated in subunit movement. May contact the P site tRNA; the 5S rRNA and some of its associated proteins might help stabilize positioning of ribosome-bound tRNAs. This chain is Large ribosomal subunit protein uL5, found in Pyrobaculum aerophilum (strain ATCC 51768 / DSM 7523 / JCM 9630 / CIP 104966 / NBRC 100827 / IM2).